Here is a 205-residue protein sequence, read N- to C-terminus: dITP/XTP pyrophosphatase (205 aa).

Position 10–15 (10–15) interacts with substrate; sequence TKNEGK. 2 residues coordinate Mg(2+): E44 and D73. D73 functions as the Proton acceptor in the catalytic mechanism. Residues S74, 156-159, K179, and 184-185 contribute to the substrate site; these read FGYD and HR.

This sequence belongs to the HAM1 NTPase family. As to quaternary structure, homodimer. Mg(2+) is required as a cofactor.

The enzyme catalyses XTP + H2O = XMP + diphosphate + H(+). The catalysed reaction is dITP + H2O = dIMP + diphosphate + H(+). It catalyses the reaction ITP + H2O = IMP + diphosphate + H(+). Its function is as follows. Pyrophosphatase that catalyzes the hydrolysis of nucleoside triphosphates to their monophosphate derivatives, with a high preference for the non-canonical purine nucleotides XTP (xanthosine triphosphate), dITP (deoxyinosine triphosphate) and ITP. Seems to function as a house-cleaning enzyme that removes non-canonical purine nucleotides from the nucleotide pool, thus preventing their incorporation into DNA/RNA and avoiding chromosomal lesions. The protein is dITP/XTP pyrophosphatase of Dictyoglomus thermophilum (strain ATCC 35947 / DSM 3960 / H-6-12).